The chain runs to 205 residues: HTH-type transcriptional repressor KstR2 (205 aa).

The 61-residue stretch at 10–70 (ASRRDELLQL…EVLRDFLDWL (61 aa)) folds into the HTH tetR-type domain. A DNA-binding region (H-T-H motif) is located at residues 33 to 52 (TVRDIADSAGILSGSLYHHF).

In terms of assembly, homodimer.

Controls the expression of a small regulon that may play a role in the utilization of cholesterol. The sequence is that of HTH-type transcriptional repressor KstR2 (kstR2) from Mycolicibacterium smegmatis (strain ATCC 700084 / mc(2)155) (Mycobacterium smegmatis).